Here is a 174-residue protein sequence, read N- to C-terminus: Large ribosomal subunit protein uL18 (174 aa).

The protein belongs to the universal ribosomal protein uL18 family. As to quaternary structure, part of the 50S ribosomal subunit. Contacts the 5S and 23S rRNAs.

Functionally, this is one of the proteins that bind and probably mediate the attachment of the 5S RNA into the large ribosomal subunit, where it forms part of the central protuberance. This is Large ribosomal subunit protein uL18 from Methanosarcina barkeri (strain Fusaro / DSM 804).